The following is a 538-amino-acid chain: Syncytin-2 (538 aa).

A signal peptide spans 1-15 (MGLLLLVLILTPLLA). The Extracellular segment spans residues 16 to 478 (AHRHPDFPLL…GWLNWEGTWK (463 aa)). The CXXC signature appears at 43–46 (CWLC). Intrachain disulfides connect cysteine 43–cysteine 46, cysteine 43–cysteine 439, and cysteine 431–cysteine 438. N-linked (GlcNAc...) asparagine glycosylation is found at asparagine 133, asparagine 146, asparagine 177, asparagine 220, asparagine 241, asparagine 247, asparagine 312, and asparagine 332. The interval 354–374 (FIPLLAGLGIIAGTGTGIAGI) is fusion peptide. The CKS-17 motif lies at 414–430 (LQNRRGLDMLTAAQGGI). The CX6CC signature appears at 431–439 (CLALDEKCC). An N-linked (GlcNAc...) asparagine glycan is attached at asparagine 443. The helical transmembrane segment at 479 to 499 (WFSWVLPFTGPLVSLLLLLLF) threads the bilayer. Residues 500–538 (GPCLLNLITQFVLSRLQAIKLQTNLSAGCRPHNIQESPF) are Cytoplasmic-facing.

The protein belongs to the gamma type-C retroviral envelope protein family. HERV class-I FRD env subfamily. As to quaternary structure, the surface and transmembrane proteins form a heterodimer. They are attached by non-covalent interactions or by a labile interchain disulfide bond. Specific enzymatic cleavages in vivo yield the mature SU and TM proteins. In terms of processing, the CXXC motif is highly conserved across a broad range of retroviral envelope proteins. It is thought to participate in the formation of a labile disulfide bond possibly with the CX6CC motif present in the transmembrane protein.

It is found in the virion. Its subcellular location is the cell membrane. In terms of biological role, this endogenous retroviral envelope protein has retained its original fusogenic properties and participates in trophoblast fusion and the formation of a syncytium during placenta morphogenesis. The interaction with MFSD2A is apparently important for this process. Its function is as follows. Endogenous envelope proteins may have kept, lost or modified their original function during evolution but this one can still make pseudotypes with MLV, HIV-1 or SIV-1 virions and confer infectivity. Retroviral envelope proteins mediate receptor recognition and membrane fusion during early infection. The surface protein mediates receptor recognition, while the transmembrane protein anchors the envelope heterodimer to the viral membrane through one transmembrane domain. The other hydrophobic domain, called fusion peptide, mediates fusion of the viral membrane with the target cell membrane. In Pongo pygmaeus (Bornean orangutan), this protein is Syncytin-2 (ERVFRD-1).